A 460-amino-acid polypeptide reads, in one-letter code: Chromosomal replication initiator protein DnaA (460 aa).

The tract at residues 1–73 is domain I, interacts with DnaA modulators; that stretch reads MEISIDSLWS…ANVVQSILGH (73 aa). The domain II stretch occupies residues 73–116; sequence HPVEIYITVAKGEEFEEIGGGGAWELPTTNSIYETPNQNRQPNT. Residues 117–333 are domain III, AAA+ region; the sequence is ELNAKYVFSR…GALTRALAYI (217 aa). Residues Gly-161, Gly-163, Lys-164, and Thr-165 each coordinate ATP. The domain IV, binds dsDNA stretch occupies residues 334-460; the sequence is SIWGLPMTVA…MNSRSRKPSL (127 aa).

This sequence belongs to the DnaA family. In terms of assembly, oligomerizes as a right-handed, spiral filament on DNA at oriC.

Its subcellular location is the cytoplasm. In terms of biological role, plays an essential role in the initiation and regulation of chromosomal replication. ATP-DnaA binds to the origin of replication (oriC) to initiate formation of the DNA replication initiation complex once per cell cycle. Binds the DnaA box (a 9 base pair repeat at the origin) and separates the double-stranded (ds)DNA. Forms a right-handed helical filament on oriC DNA; dsDNA binds to the exterior of the filament while single-stranded (ss)DNA is stabiized in the filament's interior. The ATP-DnaA-oriC complex binds and stabilizes one strand of the AT-rich DNA unwinding element (DUE), permitting loading of DNA polymerase. After initiation quickly degrades to an ADP-DnaA complex that is not apt for DNA replication. Binds acidic phospholipids. This is Chromosomal replication initiator protein DnaA from Trichormus variabilis (strain ATCC 29413 / PCC 7937) (Anabaena variabilis).